Here is a 309-residue protein sequence, read N- to C-terminus: Tumor necrosis factor ligand superfamily member 9 (309 aa).

Residues 1 to 16 are compositionally biased toward basic and acidic residues; sequence MDQHTLDVEDTADARH. The tract at residues 1–20 is disordered; that stretch reads MDQHTLDVEDTADARHPAGT. Residues 1 to 82 are Cytoplasmic-facing; sequence MDQHTLDVED…ALNFCSRHPK (82 aa). Residues 83–103 form a helical; Signal-anchor for type II membrane protein membrane-spanning segment; sequence LYGLVALVLLLLIAACVPIFT. The Extracellular portion of the chain corresponds to 104–309; sequence RTEPRPALTI…FLVKPDNPWE (206 aa). Asn139, Asn161, and Asn293 each carry an N-linked (GlcNAc...) asparagine glycan. The 156-residue stretch at 147–302 folds into the THD domain; it reads VFAKLLAKNQ…NTTSFGLFLV (156 aa).

It belongs to the tumor necrosis factor family. In terms of assembly, homotrimer.

It is found in the membrane. Cytokine that binds to TNFRSF9. Induces the proliferation of activated peripheral blood T-cells. May have a role in activation-induced cell death (AICD). May play a role in cognate interactions between T-cells and B-cells/macrophages. This Mus musculus (Mouse) protein is Tumor necrosis factor ligand superfamily member 9 (Tnfsf9).